We begin with the raw amino-acid sequence, 208 residues long: Claudin-like protein ZF-A89 (208 aa).

The next 4 membrane-spanning stretches (helical) occupy residues 8 to 28 (LLATVLAIIGWLGEIVICALP), 82 to 102 (ALVVISIIVTFMGVFLTIAGG), 117 to 137 (VVVAAGVFFLVGGILCLIPVC), and 160 to 180 (LGASLFIGWCASGLLLLGGAL).

It belongs to the claudin family.

Its subcellular location is the cell membrane. The protein resides in the cell junction. It is found in the tight junction. Functionally, component of tight junction (TJ) strands. The polypeptide is Claudin-like protein ZF-A89 (cldnd) (Danio rerio (Zebrafish)).